The sequence spans 283 residues: ATP phosphoribosyltransferase (283 aa).

This sequence belongs to the ATP phosphoribosyltransferase family. Long subfamily. The cofactor is Mg(2+).

The protein localises to the cytoplasm. It catalyses the reaction 1-(5-phospho-beta-D-ribosyl)-ATP + diphosphate = 5-phospho-alpha-D-ribose 1-diphosphate + ATP. It functions in the pathway amino-acid biosynthesis; L-histidine biosynthesis; L-histidine from 5-phospho-alpha-D-ribose 1-diphosphate: step 1/9. Feedback inhibited by histidine. Functionally, catalyzes the condensation of ATP and 5-phosphoribose 1-diphosphate to form N'-(5'-phosphoribosyl)-ATP (PR-ATP). Has a crucial role in the pathway because the rate of histidine biosynthesis seems to be controlled primarily by regulation of HisG enzymatic activity. In Ignicoccus hospitalis (strain KIN4/I / DSM 18386 / JCM 14125), this protein is ATP phosphoribosyltransferase.